The chain runs to 371 residues: S-adenosylmethionine:tRNA ribosyltransferase-isomerase (371 aa).

It belongs to the QueA family. As to quaternary structure, monomer.

The protein resides in the cytoplasm. It catalyses the reaction 7-aminomethyl-7-carbaguanosine(34) in tRNA + S-adenosyl-L-methionine = epoxyqueuosine(34) in tRNA + adenine + L-methionine + 2 H(+). Its pathway is tRNA modification; tRNA-queuosine biosynthesis. Its function is as follows. Transfers and isomerizes the ribose moiety from AdoMet to the 7-aminomethyl group of 7-deazaguanine (preQ1-tRNA) to give epoxyqueuosine (oQ-tRNA). The chain is S-adenosylmethionine:tRNA ribosyltransferase-isomerase from Nitratidesulfovibrio vulgaris (strain DP4) (Desulfovibrio vulgaris).